We begin with the raw amino-acid sequence, 129 residues long: Small ribosomal subunit protein uS12 (129 aa).

Position 89 is a 3-methylthioaspartic acid (Asp-89). Residues 101 to 129 (SLDTSGVADRKQSRSKYGAKQPKAGAAKK) form a disordered region. A compositionally biased stretch (low complexity) spans 116-129 (KYGAKQPKAGAAKK).

It belongs to the universal ribosomal protein uS12 family. Part of the 30S ribosomal subunit. Contacts proteins S8 and S17. May interact with IF1 in the 30S initiation complex.

Its function is as follows. With S4 and S5 plays an important role in translational accuracy. In terms of biological role, interacts with and stabilizes bases of the 16S rRNA that are involved in tRNA selection in the A site and with the mRNA backbone. Located at the interface of the 30S and 50S subunits, it traverses the body of the 30S subunit contacting proteins on the other side and probably holding the rRNA structure together. The combined cluster of proteins S8, S12 and S17 appears to hold together the shoulder and platform of the 30S subunit. This is Small ribosomal subunit protein uS12 from Chlorobaculum parvum (strain DSM 263 / NCIMB 8327) (Chlorobium vibrioforme subsp. thiosulfatophilum).